We begin with the raw amino-acid sequence, 319 residues long: Acetyl-coenzyme A carboxylase carboxyl transferase subunit alpha (319 aa).

The 256-residue stretch at 38–293 (HALQDKLRLR…KAVLLNELDA (256 aa)) folds into the CoA carboxyltransferase C-terminal domain.

It belongs to the AccA family. As to quaternary structure, acetyl-CoA carboxylase is a heterohexamer composed of biotin carboxyl carrier protein (AccB), biotin carboxylase (AccC) and two subunits each of ACCase subunit alpha (AccA) and ACCase subunit beta (AccD).

It localises to the cytoplasm. The catalysed reaction is N(6)-carboxybiotinyl-L-lysyl-[protein] + acetyl-CoA = N(6)-biotinyl-L-lysyl-[protein] + malonyl-CoA. The protein operates within lipid metabolism; malonyl-CoA biosynthesis; malonyl-CoA from acetyl-CoA: step 1/1. In terms of biological role, component of the acetyl coenzyme A carboxylase (ACC) complex. First, biotin carboxylase catalyzes the carboxylation of biotin on its carrier protein (BCCP) and then the CO(2) group is transferred by the carboxyltransferase to acetyl-CoA to form malonyl-CoA. The chain is Acetyl-coenzyme A carboxylase carboxyl transferase subunit alpha from Stenotrophomonas maltophilia (strain R551-3).